The chain runs to 141 residues: Nucleoside triphosphatase NudI (141 aa).

A Nudix hydrolase domain is found at 1-141; that stretch reads MRQRTIVCPL…RKTLRLKGLL (141 aa). The Nudix box signature appears at 38 to 59; that stretch reads GGVEPGERIEEALRREIREELG.

The protein belongs to the Nudix hydrolase family. NudI subfamily. Monomer. Mg(2+) is required as a cofactor.

The enzyme catalyses a ribonucleoside 5'-triphosphate + H2O = a ribonucleoside 5'-phosphate + diphosphate + H(+). It catalyses the reaction a 2'-deoxyribonucleoside 5'-triphosphate + H2O = a 2'-deoxyribonucleoside 5'-phosphate + diphosphate + H(+). It carries out the reaction dUTP + H2O = dUMP + diphosphate + H(+). The catalysed reaction is dTTP + H2O = dTMP + diphosphate + H(+). The enzyme catalyses dCTP + H2O = dCMP + diphosphate + H(+). Functionally, catalyzes the hydrolysis of nucleoside triphosphates, with a preference for pyrimidine deoxynucleoside triphosphates (dUTP, dTTP and dCTP). The sequence is that of Nucleoside triphosphatase NudI from Escherichia coli O6:K15:H31 (strain 536 / UPEC).